The following is a 97-amino-acid chain: Secreted transmembrane peptide 4 (97 aa).

The N-terminal stretch at 1 to 33 (MTKNMTKKKMGLMSPNIAAFVLPMLLVLFTISS) is a signal peptide. Positions 54-67 (IVFTPPSSSCGGSP) match the SCOOP motif motif. The short motif at 60-62 (SSS) is the SxS motif essential for MIK2 binding element. Positions 75–97 (WMPRRPCRRTRPPGTNIPVSQSP) are disordered.

Belongs to the serine rich endogenous peptide (SCOOP) phytocytokine family. As to quaternary structure, interacts with MIK2 (via extracellular leucine-rich repeat domain); this interaction triggers the formation of complex between MIK2 and the BAK1/SERK3 and SERK4 coreceptors, and subsequent BAK1 activation by phosphorylation. In terms of tissue distribution, mostly expressed in leaves and stems, and, to a lower extent, in roots, siliques, seeds and flowers.

The protein resides in the cell membrane. It is found in the secreted. The protein localises to the extracellular space. Its subcellular location is the apoplast. Its function is as follows. Brassicaceae-specific phytocytokine (plant endogenous peptide released into the apoplast) perceived by MIK2 in a BAK1/SERK3 and SERK4 coreceptors-dependent manner, that modulates various physiological and antimicrobial processes including growth prevention and reactive oxygen species (ROS) response regulation. Prevents general growth and development. The polypeptide is Secreted transmembrane peptide 4 (Arabidopsis thaliana (Mouse-ear cress)).